Consider the following 230-residue polypeptide: MAQGLIEVERKFLPGPGTEERLQELGGTLEYRVTFRDTYYDTPELSLMQADHWLRRREDSGWELKCPGAAGVLGPHTEYKELTAEPTIVAQLCKVLRADGLGAGDVAAVLGPLGLQEVASFVTKRSAWKLVLLGADEEEPQLRVDLDTADFGYAVGEVEALVHEEAEVPTALEKIHRLSSMLGVPAQETAPAKLIVYLQRFRPQDYQRLLEVNSSRERPQETEDPDHCLG.

Alanine 2 is subject to N-acetylalanine. Residues 5–201 (LIEVERKFLP…AKLIVYLQRF (197 aa)) enclose the CYTH domain. Mg(2+) is bound by residues glutamate 7 and glutamate 9. Positions 11, 55, 57, 65, and 125 each coordinate substrate. Residues aspartate 145, glutamate 157, and glutamate 159 each coordinate Mg(2+). Residue glutamate 157 participates in substrate binding. Lysine 193 is a substrate binding site.

Belongs to the ThTPase family. As to quaternary structure, monomer. Requires Mg(2+) as cofactor. In terms of tissue distribution, widely expressed but at a low level.

It is found in the cytoplasm. The enzyme catalyses thiamine triphosphate + H2O = thiamine diphosphate + phosphate + H(+). Its function is as follows. Hydrolase highly specific for thiamine triphosphate (ThTP). This chain is Thiamine-triphosphatase (THTPA), found in Homo sapiens (Human).